Here is a 285-residue protein sequence, read N- to C-terminus: ATP synthase gamma chain (285 aa).

The protein belongs to the ATPase gamma chain family. F-type ATPases have 2 components, CF(1) - the catalytic core - and CF(0) - the membrane proton channel. CF(1) has five subunits: alpha(3), beta(3), gamma(1), delta(1), epsilon(1). CF(0) has three main subunits: a, b and c.

It localises to the cell membrane. In terms of biological role, produces ATP from ADP in the presence of a proton gradient across the membrane. The gamma chain is believed to be important in regulating ATPase activity and the flow of protons through the CF(0) complex. The sequence is that of ATP synthase gamma chain from Dehalococcoides mccartyi (strain ATCC BAA-2266 / KCTC 15142 / 195) (Dehalococcoides ethenogenes (strain 195)).